A 796-amino-acid chain; its full sequence is Kinesin-like protein KIF3C (796 aa).

The 358-residue stretch at 10–367 (ALKVVARCRP…LRFANRAKNI (358 aa)) folds into the Kinesin motor domain. Residue 97–104 (GQTGTGKT) participates in ATP binding. Disordered regions lie at residues 252 to 292 (RQNK…PKEA), 397 to 422 (EKKG…APAG), and 758 to 796 (KVRK…VDHD). Residues 256-269 (AGPNAAGGPATQPT) are compositionally biased toward low complexity. Positions 378–632 (KDTLLREFQE…NEQTRELKLK (255 aa)) form a coiled coil. Positions 401–416 (MLGKRPRRKSSRRKKA) are enriched in basic residues. The interval 633–793 (YLIIENFIPP…SVPLHPATVV (161 aa)) is globular.

Belongs to the TRAFAC class myosin-kinesin ATPase superfamily. Kinesin family. Kinesin II subfamily. In terms of assembly, heterodimer of KIF3A and KIF3C.

It is found in the cytoplasm. Its subcellular location is the cytoskeleton. Functionally, microtubule-based anterograde translocator for membranous organelles. The protein is Kinesin-like protein KIF3C (Kif3c) of Mus musculus (Mouse).